The primary structure comprises 272 residues: MMACHC-like protein (272 aa).

Residues Asp121, 132–135, and 146–148 contribute to the substrate site; these read ILMQ and YYQ.

The protein belongs to the MMACHC family. The cofactor is FAD. FMN serves as cofactor.

The protein resides in the cytoplasm. In terms of biological role, catalyzes the reductive dealkylation of cyanocobalamin to cob(II)alamin, using FAD or FMN as cofactor and NADPH as cosubstrate. Can also catalyze the glutathione-dependent reductive demethylation of methylcobalamin, and, with much lower efficiency, the glutathione-dependent reductive demethylation of adenosylcobalamin. Under anaerobic conditions cob(I)alamin is the first product; it is highly reactive and is converted to aquocob(II)alamin in the presence of oxygen. Binds cyanocobalamin, adenosylcobalamin, methylcobalamin and other, related vitamin B12 derivatives. This Caenorhabditis elegans protein is MMACHC-like protein (cblc-1).